A 211-amino-acid chain; its full sequence is Large ribosomal subunit protein uL3 (211 aa).

The protein belongs to the universal ribosomal protein uL3 family. As to quaternary structure, part of the 50S ribosomal subunit. Forms a cluster with proteins L14 and L19.

In terms of biological role, one of the primary rRNA binding proteins, it binds directly near the 3'-end of the 23S rRNA, where it nucleates assembly of the 50S subunit. This is Large ribosomal subunit protein uL3 from Akkermansia muciniphila (strain ATCC BAA-835 / DSM 22959 / JCM 33894 / BCRC 81048 / CCUG 64013 / CIP 107961 / Muc).